The primary structure comprises 185 residues: Ribosome-recycling factor (185 aa).

It belongs to the RRF family.

The protein localises to the cytoplasm. Responsible for the release of ribosomes from messenger RNA at the termination of protein biosynthesis. May increase the efficiency of translation by recycling ribosomes from one round of translation to another. This Geobacter sp. (strain M21) protein is Ribosome-recycling factor.